The chain runs to 130 residues: Early 3 receptor internalization and degradation beta protein (130 aa).

A signal peptide spans 1-19 (MKRSVIFVLLIFCALPVLC). Residues 53 to 77 (AWLYAIISVMVFCSTIFALAIYPYL) traverse the membrane as a helical segment. Residues 122-125 (YFNL) form a tyrosine-based sorting motif region.

It belongs to the adenoviridae E3_RID-beta family. As to quaternary structure, interacts with E3 RID-alpha and E3 CR1-alpha. Post-translationally, phosphorylated on serine. In terms of processing, O-glycosylated, but not N-glycosylated.

The protein localises to the host membrane. Functionally, prevents infected cell apoptosis induced by the host immune system. Acts by down-regulating a number of cell surface receptors in the tumor necrosis factor (TNF) receptor superfamily, namely FAS, TNFRSF10A/TRAIL receptor 1, and TNFRSF10B/TRAIL receptor 2. Down-regulation of these death receptors protects adenovirus-infected cells from apoptosis induced by the death receptor ligands Fas ligand and TRAIL. RID complex also down-regulates certain tyrosine kinase cell surface receptors, especially the epidermal growth factor receptor (EGFR). RID-mediated Fas and EGFR down-regulation occurs via endocytosis of the receptors into endosomes followed by transport to and degradation within lysosomes. The chain is Early 3 receptor internalization and degradation beta protein from Human adenovirus C serotype 2 (HAdV-2).